The following is a 143-amino-acid chain: Putative pre-16S rRNA nuclease (143 aa).

This sequence belongs to the YqgF nuclease family.

The protein localises to the cytoplasm. Functionally, could be a nuclease involved in processing of the 5'-end of pre-16S rRNA. This chain is Putative pre-16S rRNA nuclease, found in Mycoplasma capricolum subsp. capricolum (strain California kid / ATCC 27343 / NCTC 10154).